A 743-amino-acid chain; its full sequence is F-box protein COS111 (743 aa).

The 47-residue stretch at 145 to 191 (ELHIKNLPVEILDYIFYLVDDNLDYKSCMYTCKLFYFLAKPYYYENL) folds into the F-box domain. Disordered stretches follow at residues 224 to 257 (IKPGYDEDEQEEGQEENAENGEEENGGGARDPQY) and 311 to 330 (FSNVSSKSSRSTSSKSSSST). A compositionally biased stretch (acidic residues) spans 229–248 (DEDEQEEGQEENAENGEEEN).

Functionally, F-box protein probably involved in ubiquitin conjugation pathway. This Candida albicans (strain SC5314 / ATCC MYA-2876) (Yeast) protein is F-box protein COS111 (COS111).